The chain runs to 207 residues: C-type lectin domain family 2 member D11 (207 aa).

The Cytoplasmic segment spans residues 1–44 (MSAKKASQPMLNTTGSLQEGEMGKMFHGKCLRIVSPESPAKLYC). 2 positions are modified to phosphoserine: Ser-7 and Ser-16. A helical; Signal-anchor for type II membrane protein transmembrane segment spans residues 45–65 (CYGVIMVLSVAVVALSVALSV). The Extracellular portion of the chain corresponds to 66 to 207 (KMTPQISTIN…LQCKTPFSPM (142 aa)). One can recognise a C-type lectin domain in the interval 87-198 (VGNKCFYFSE…SCSKLNSYSL (112 aa)). N-linked (GlcNAc...) asparagine glycosylation occurs at Asn-100.

It is found in the cell membrane. In terms of biological role, receptor for KLRB1B that protects target cells against natural killer cell-mediated lysis. The polypeptide is C-type lectin domain family 2 member D11 (Clec2d11) (Rattus norvegicus (Rat)).